Here is a 1294-residue protein sequence, read N- to C-terminus: Phosphoribosylformylglycinamidine synthase (1294 aa).

Residues 303 to 325 (WPGAATGSGGEIRDEGATGRGSK) are disordered. ATP-binding positions include 305 to 316 (GAATGSGGEIRD), 384 to 386 (TGY), and Ala676. Mg(2+)-binding residues include Asp677, Glu716, Asn720, and Asp883. Ser885 lines the ATP pocket. The Glutamine amidotransferase type-1 domain maps to 1041 to 1294 (VAVLREQGVN…MFRNARRQLG (254 aa)). Cys1134 serves as the catalytic Nucleophile. Active-site residues include His1259 and Glu1261.

It in the N-terminal section; belongs to the FGAMS family. As to quaternary structure, monomer.

It is found in the cytoplasm. It carries out the reaction N(2)-formyl-N(1)-(5-phospho-beta-D-ribosyl)glycinamide + L-glutamine + ATP + H2O = 2-formamido-N(1)-(5-O-phospho-beta-D-ribosyl)acetamidine + L-glutamate + ADP + phosphate + H(+). It functions in the pathway purine metabolism; IMP biosynthesis via de novo pathway; 5-amino-1-(5-phospho-D-ribosyl)imidazole from N(2)-formyl-N(1)-(5-phospho-D-ribosyl)glycinamide: step 1/2. In terms of biological role, phosphoribosylformylglycinamidine synthase involved in the purines biosynthetic pathway. Catalyzes the ATP-dependent conversion of formylglycinamide ribonucleotide (FGAR) and glutamine to yield formylglycinamidine ribonucleotide (FGAM) and glutamate. The sequence is that of Phosphoribosylformylglycinamidine synthase from Pectobacterium atrosepticum (strain SCRI 1043 / ATCC BAA-672) (Erwinia carotovora subsp. atroseptica).